The primary structure comprises 497 residues: Glycerol kinase (497 aa).

ADP is bound at residue Thr11. ATP-binding residues include Thr11, Ser12, and Ser13. Thr11 serves as a coordination point for sn-glycerol 3-phosphate. An ADP-binding site is contributed by Arg15. Sn-glycerol 3-phosphate-binding residues include Arg81, Glu82, Tyr133, and Asp242. 5 residues coordinate glycerol: Arg81, Glu82, Tyr133, Asp242, and Gln243. Residues Thr264 and Gly307 each contribute to the ADP site. Positions 264, 307, 311, and 412 each coordinate ATP. Residues Gly412 and Asn416 each contribute to the ADP site.

This sequence belongs to the FGGY kinase family.

It carries out the reaction glycerol + ATP = sn-glycerol 3-phosphate + ADP + H(+). It participates in polyol metabolism; glycerol degradation via glycerol kinase pathway; sn-glycerol 3-phosphate from glycerol: step 1/1. With respect to regulation, inhibited by fructose 1,6-bisphosphate (FBP). Key enzyme in the regulation of glycerol uptake and metabolism. Catalyzes the phosphorylation of glycerol to yield sn-glycerol 3-phosphate. In Polaromonas naphthalenivorans (strain CJ2), this protein is Glycerol kinase.